Reading from the N-terminus, the 116-residue chain is CDKN2AIP N-terminal-like protein (116 aa).

M1 is modified (N-acetylmethionine). The 93-residue stretch at 24 to 116 (AEQFRSYSES…RSELMKKHQS (93 aa)) folds into the XRN2-binding (XTBD) domain.

This sequence belongs to the CARF family. In terms of assembly, interacts with XRN2; the interaction is direct.

This Homo sapiens (Human) protein is CDKN2AIP N-terminal-like protein (CDKN2AIPNL).